Reading from the N-terminus, the 108-residue chain is Large ribosomal subunit protein uL23 (108 aa).

This sequence belongs to the universal ribosomal protein uL23 family. In terms of assembly, part of the 50S ribosomal subunit. Contacts protein L29, and trigger factor when it is bound to the ribosome.

Its function is as follows. One of the early assembly proteins it binds 23S rRNA. One of the proteins that surrounds the polypeptide exit tunnel on the outside of the ribosome. Forms the main docking site for trigger factor binding to the ribosome. The sequence is that of Large ribosomal subunit protein uL23 from Albidiferax ferrireducens (strain ATCC BAA-621 / DSM 15236 / T118) (Rhodoferax ferrireducens).